The following is a 67-amino-acid chain: MEGISIAKLLIIGALIVLLFGTNKLRSLGGDLGSAIKGFKKAMKDEDTSATRTTAEDVPAERVVHKD.

The chain crosses the membrane as a helical span at residues 1 to 21 (MEGISIAKLLIIGALIVLLFG). Positions 46 to 67 (EDTSATRTTAEDVPAERVVHKD) are disordered.

It belongs to the TatA/E family. TatE subfamily.

Its subcellular location is the cell inner membrane. In terms of biological role, part of the twin-arginine translocation (Tat) system that transports large folded proteins containing a characteristic twin-arginine motif in their signal peptide across membranes. TatE shares overlapping functions with TatA. This chain is Probable Sec-independent protein translocase protein TatE, found in Pantoea vagans (strain C9-1) (Pantoea agglomerans (strain C9-1)).